Consider the following 740-residue polypeptide: Dipeptidyl peptidase family member 6 (740 aa).

Met-1 is a topological domain (cytoplasmic). A helical; Signal-anchor for type II membrane protein membrane pass occupies residues 2-22 (LFLPILILNLLIITHAIDIIP). The Lumenal portion of the chain corresponds to 23 to 740 (REVLFQDPKY…VMNRIFPVQG (718 aa)). N-linked (GlcNAc...) asparagine glycans are attached at residues Asn-108, Asn-308, and Asn-506. Active-site charge relay system residues include Ser-516, Asp-604, and His-636. Cysteines 535 and 658 form a disulfide. N-linked (GlcNAc...) asparagine glycosylation is present at Asn-672.

It belongs to the peptidase S9B family. DPPIV subfamily.

The protein resides in the cell membrane. Removes N-terminal dipeptides sequentially from polypeptides. Essential for control of distal tip cell migration. The chain is Dipeptidyl peptidase family member 6 (dpf-6) from Caenorhabditis elegans.